Here is a 211-residue protein sequence, read N- to C-terminus: ATP phosphoribosyltransferase (211 aa).

Belongs to the ATP phosphoribosyltransferase family. Short subfamily. In terms of assembly, heteromultimer composed of HisG and HisZ subunits.

It is found in the cytoplasm. It catalyses the reaction 1-(5-phospho-beta-D-ribosyl)-ATP + diphosphate = 5-phospho-alpha-D-ribose 1-diphosphate + ATP. The protein operates within amino-acid biosynthesis; L-histidine biosynthesis; L-histidine from 5-phospho-alpha-D-ribose 1-diphosphate: step 1/9. In terms of biological role, catalyzes the condensation of ATP and 5-phosphoribose 1-diphosphate to form N'-(5'-phosphoribosyl)-ATP (PR-ATP). Has a crucial role in the pathway because the rate of histidine biosynthesis seems to be controlled primarily by regulation of HisG enzymatic activity. This chain is ATP phosphoribosyltransferase, found in Rippkaea orientalis (strain PCC 8801 / RF-1) (Cyanothece sp. (strain PCC 8801)).